A 51-amino-acid chain; its full sequence is MASHKTFRIKRFLAKKQKQNRPIPQWIQMKTGNKIMYNSKRRHWRRTKLGL.

Belongs to the eukaryotic ribosomal protein eL39 family. Component of a male germ cell-specific 60S large ribosomal subunit (LSU), which contains RPL10L and RPL39L, instead of RPL10 and RPL39 paralogs. The composition of the rest of the complex is similar to classical ribosomes. Highly expressed in spermatocytes and spermatids. Highly expressed in embryonic stem cells.

It is found in the cytoplasm. Male germ cell-specific component of the ribosome, which is required for the formation of sperm and male fertility. Replaces the RPL39 paralog in the ribosome of male germ cells. The ribosome is a large ribonucleoprotein complex responsible for the synthesis of proteins in the cell. The male germ cell-specific ribosome displays a ribosomal polypeptide exit tunnel of distinct size and charge states compared with the classical ribosome. It is responsible for regulating the biosynthesis and folding of a subset of male germ-cell-specific proteins that are essential for the formation of sperm. The chain is Large ribosomal subunit protein eL39-like from Mus musculus (Mouse).